Consider the following 78-residue polypeptide: Acyl carrier protein 1 (78 aa).

One can recognise a Carrier domain in the interval 2 to 77 (STIEERVKKI…EAIDYIVAHQ (76 aa)). The residue at position 37 (serine 37) is an O-(pantetheine 4'-phosphoryl)serine.

It belongs to the acyl carrier protein (ACP) family. In terms of processing, 4'-phosphopantetheine is transferred from CoA to a specific serine of apo-ACP by AcpS. This modification is essential for activity because fatty acids are bound in thioester linkage to the sulfhydryl of the prosthetic group.

It is found in the cytoplasm. The protein operates within lipid metabolism; fatty acid biosynthesis. In terms of biological role, carrier of the growing fatty acid chain in fatty acid biosynthesis. The chain is Acyl carrier protein 1 from Pseudomonas aeruginosa (strain ATCC 15692 / DSM 22644 / CIP 104116 / JCM 14847 / LMG 12228 / 1C / PRS 101 / PAO1).